A 728-amino-acid polypeptide reads, in one-letter code: Phosphoribosylformylglycinamidine synthase subunit PurL (728 aa).

The active site involves histidine 42. Residues tyrosine 45 and lysine 84 each contribute to the ATP site. Glutamate 86 contributes to the Mg(2+) binding site. Substrate is bound by residues 87 to 90 (SHNH) and arginine 109. The Proton acceptor role is filled by histidine 88. Aspartate 110 is a Mg(2+) binding site. Residue glutamine 237 coordinates substrate. Aspartate 265 contributes to the Mg(2+) binding site. Substrate is bound at residue 309 to 311 (ESQ). ATP contacts are provided by aspartate 491 and glycine 528. Asparagine 529 lines the Mg(2+) pocket. Residue serine 531 participates in substrate binding.

The protein belongs to the FGAMS family. Monomer. Part of the FGAM synthase complex composed of 1 PurL, 1 PurQ and 2 PurS subunits.

The protein resides in the cytoplasm. It catalyses the reaction N(2)-formyl-N(1)-(5-phospho-beta-D-ribosyl)glycinamide + L-glutamine + ATP + H2O = 2-formamido-N(1)-(5-O-phospho-beta-D-ribosyl)acetamidine + L-glutamate + ADP + phosphate + H(+). It functions in the pathway purine metabolism; IMP biosynthesis via de novo pathway; 5-amino-1-(5-phospho-D-ribosyl)imidazole from N(2)-formyl-N(1)-(5-phospho-D-ribosyl)glycinamide: step 1/2. Functionally, part of the phosphoribosylformylglycinamidine synthase complex involved in the purines biosynthetic pathway. Catalyzes the ATP-dependent conversion of formylglycinamide ribonucleotide (FGAR) and glutamine to yield formylglycinamidine ribonucleotide (FGAM) and glutamate. The FGAM synthase complex is composed of three subunits. PurQ produces an ammonia molecule by converting glutamine to glutamate. PurL transfers the ammonia molecule to FGAR to form FGAM in an ATP-dependent manner. PurS interacts with PurQ and PurL and is thought to assist in the transfer of the ammonia molecule from PurQ to PurL. This Campylobacter jejuni subsp. jejuni serotype O:6 (strain 81116 / NCTC 11828) protein is Phosphoribosylformylglycinamidine synthase subunit PurL.